We begin with the raw amino-acid sequence, 137 residues long: MTSRRDWQLQQLGITQWSLRRPGALQGEIAIAIPAHVRLVMVANDLPALTDPLVSDVLRALTVSPDQVLQLTPEKIAMLPQGSHCNSWRLGTDEPLSLEGAQVASPALTDLRANPTARAALWQQICTYEHDFFPRND.

It belongs to the DNA polymerase III psi/HolD chain family. As to quaternary structure, the DNA polymerase III holoenzyme complex contains at least 10 different subunits organized into 3 functionally essential subassemblies: the Pol III core, the beta sliding clamp processivity factor and the clamp-loading complex. The Pol III core (subunits alpha, epsilon and theta) contains the polymerase and the 3'-5' exonuclease proofreading activities. The polymerase is tethered to the template via the dimeric beta sliding clamp processivity factor. The clamp-loading complex (also called gamma complex) assembles the beta sliding clamp onto the primed template and plays a central role in the organization and communication at the replication fork. The clamp-loading complex contains delta, delta', psi and chi, and 3 copies of either or both of two different DnaX proteins, gamma and tau. The DNA replisome complex has a single clamp loader (3 tau and 1 each of delta, delta', psi and chi subunits) which binds 3 Pol III cores (1 core on the leading strand and 2 on the lagging strand) each with a beta sliding clamp dimer. Additional proteins in the replisome are other copies of gamma, psi (this protein) and chi (holC), SSB, DNA helicase and RNA primase. The clamp loader hydrolyzes ATP to assemble the beta processivity factor onto the primed template and plays a central role in the organization and communication at the replication fork. Interacts directly with the chi subunit (holC).

It carries out the reaction DNA(n) + a 2'-deoxyribonucleoside 5'-triphosphate = DNA(n+1) + diphosphate. Part of the beta sliding clamp loading complex, which hydrolyzes ATP to load the beta clamp onto primed DNA to form the DNA replication pre-initiation complex. DNA polymerase III is a complex, multichain enzyme responsible for most of the replicative synthesis in bacteria. This DNA polymerase also exhibits 3' to 5' exonuclease activity. In Escherichia coli (strain K12), this protein is DNA polymerase III subunit psi.